A 228-amino-acid chain; its full sequence is Cytochrome c oxidase subunit 2 (228 aa).

At 1–26 the chain is on the mitochondrial intermembrane side; the sequence is MPNWGQVMFQDAASSVMLQLVSFHDH. Residues 27 to 47 form a helical membrane-spanning segment; that stretch reads ALLVLTLVLTVVGYALLALML. Residues 48-60 lie on the Mitochondrial matrix side of the membrane; that stretch reads NKQVNRYIMEAQT. A helical transmembrane segment spans residues 61 to 81; it reads VETIWTILPALILLVLALPSL. Residues 82 to 228 lie on the Mitochondrial intermembrane side of the membrane; it reads RILYITDEVS…FMSWVSNFKP (147 aa). The Cu cation site is built by histidine 161, cysteine 196, glutamate 198, cysteine 200, histidine 204, and methionine 207. A Mg(2+)-binding site is contributed by glutamate 198.

This sequence belongs to the cytochrome c oxidase subunit 2 family. Component of the cytochrome c oxidase (complex IV, CIV), a multisubunit enzyme composed of a catalytic core of 3 subunits and several supernumerary subunits. The complex exists as a monomer or a dimer and forms supercomplexes (SCs) in the inner mitochondrial membrane with ubiquinol-cytochrome c oxidoreductase (cytochrome b-c1 complex, complex III, CIII). Requires Cu cation as cofactor.

It is found in the mitochondrion inner membrane. It catalyses the reaction 4 Fe(II)-[cytochrome c] + O2 + 8 H(+)(in) = 4 Fe(III)-[cytochrome c] + 2 H2O + 4 H(+)(out). Its function is as follows. Component of the cytochrome c oxidase, the last enzyme in the mitochondrial electron transport chain which drives oxidative phosphorylation. The respiratory chain contains 3 multisubunit complexes succinate dehydrogenase (complex II, CII), ubiquinol-cytochrome c oxidoreductase (cytochrome b-c1 complex, complex III, CIII) and cytochrome c oxidase (complex IV, CIV), that cooperate to transfer electrons derived from NADH and succinate to molecular oxygen, creating an electrochemical gradient over the inner membrane that drives transmembrane transport and the ATP synthase. Cytochrome c oxidase is the component of the respiratory chain that catalyzes the reduction of oxygen to water. Electrons originating from reduced cytochrome c in the intermembrane space (IMS) are transferred via the dinuclear copper A center (CU(A)) of subunit 2 and heme A of subunit 1 to the active site in subunit 1, a binuclear center (BNC) formed by heme A3 and copper B (CU(B)). The BNC reduces molecular oxygen to 2 water molecules using 4 electrons from cytochrome c in the IMS and 4 protons from the mitochondrial matrix. The sequence is that of Cytochrome c oxidase subunit 2 (COII) from Lumbricus terrestris (Common earthworm).